Here is a 421-residue protein sequence, read N- to C-terminus: Serine--tRNA ligase (421 aa).

An L-serine-binding site is contributed by 232–234 (TAE). Residue 262–264 (RSE) participates in ATP binding. L-serine is bound at residue Glu-285. 349-352 (EVSS) contacts ATP. Residue Ser-384 participates in L-serine binding.

It belongs to the class-II aminoacyl-tRNA synthetase family. Type-1 seryl-tRNA synthetase subfamily. As to quaternary structure, homodimer. The tRNA molecule binds across the dimer.

It localises to the cytoplasm. It catalyses the reaction tRNA(Ser) + L-serine + ATP = L-seryl-tRNA(Ser) + AMP + diphosphate + H(+). It carries out the reaction tRNA(Sec) + L-serine + ATP = L-seryl-tRNA(Sec) + AMP + diphosphate + H(+). It functions in the pathway aminoacyl-tRNA biosynthesis; selenocysteinyl-tRNA(Sec) biosynthesis; L-seryl-tRNA(Sec) from L-serine and tRNA(Sec): step 1/1. Its function is as follows. Catalyzes the attachment of serine to tRNA(Ser). Is also able to aminoacylate tRNA(Sec) with serine, to form the misacylated tRNA L-seryl-tRNA(Sec), which will be further converted into selenocysteinyl-tRNA(Sec). The chain is Serine--tRNA ligase from Mycoplasma mobile (strain ATCC 43663 / 163K / NCTC 11711) (Mesomycoplasma mobile).